The primary structure comprises 1242 residues: MFPYPTLNYSPMAPVNPMAYRDPNPPRRRWRPFRPPLAAQIEDLRRSIANLTFKQRAPNPPAGPPAKRKKPAPKPKPAAPKKKRQPPPAKKQKRKQKPGKRQRMCMKLESDKTFPILLNGQVNGYACVVGGRVFKPLHVEGKIDNEQLAAIKLKKASIYDLEYGDVPQCMKSDTLQYTSEKPPGFYNWHHGAVQYENNRFTVPRGVGGKGDSGRPILDNRGRVVAIVLGGANEGSRTALSVVTWNQKGVTVKDTPEGSEPWSLTTVMCVLANITFPCDQPPCMPCCYEKNPHETLTMLEQNYDSQAYDQLLEAAVKCNSRRTRRDLETHFTQYKLARPYIADCSNCGHGRCDSPIAIEDVRGNAHAGYIRIQTSAMFGLKSDGVDLAYMSFMNGKTLKAIKIEHLYARTSAPCSLVSYHGYYLLAQCPPGDTVTVGFQDGANKHMCTIAHKVEFRPVGREKYRHPPAHGVELPCNKYTHKRADQGHYVEMHQPGLVADHSLLSLSSTKVKITVPSGSQVKYYCKCPDVQEGTTSGDHTTTCTDLKQCRAYLIDNKKWVFNSGKLPRGEGETFKGKLHVPFVPVTSKCTATLAPEPLVEHKHRSLILHLHPEHPTLLTTRALGNDARPTRQWVDQPTTVNFTVTGEGFEYTWGNHPPKRVWAQESGEGNPHGWPHEVVIYYYNRYPMTTIVGLCTCAAIIMVSCITSVWLLCRTRNLCITPYRLAPNAQVPILLAVLCCVKPTRADDTLQVLNYLWNNNQNFFWMQTLIPLAALIVCMRMLRCLLCCGPAFLLVCGALGAAAYEHTAVMPNKVGIPYKALVERPGYAPVHLQIQLVTTKIIPSANLEYITCKYKTKVPSPVVKCCGATQCTSKQHPDYQCQVFAGVYPFMWGGAYCFCDTENTQMSEAYIERAEECSVDQAKAYKVHTGTVQAVVNITYGSVSWRSADVYVNGETPAKIGDAKLTIGPLSSAWTPFDSKVVVYGHEVYNYDFPEYGTGKAGSFGDLQSRTLTSNDLYANTNLKLQRPQPGVVHTPYTQAPSGFERWKKDRGAPLNDIAPFGCTIALDPLRAENCAVGNIPLSIDIPDAAFTRISETPTVSDLECKITECTYASDFGGIATVAYKASKAGNCPIHSPSGIAVIKENDVTLADSGSFTFHFSTASIHPAFKMQICTSVVTCKGDCKPPKDHIVDYPAQHTETFTSAVSATAWSWLKVLVGSTSAFIVLGLIATAVVALVLFTHKH.

Positions 1 to 36 (MFPYPTLNYSPMAPVNPMAYRDPNPPRRRWRPFRPP) are necessary for nucleocapsid assembly and virus assembly. The tract at residues 1–104 (MFPYPTLNYS…KQKPGKRQRM (104 aa)) is disordered. The host transcription inhibition stretch occupies residues 37-70 (LAAQIEDLRRSIANLTFKQRAPNPPAGPPAKRKK). Residues 44–51 (LRRSIANL) carry the Supraphysiological nuclear export signal motif. Residues 66-104 (AKRKKPAPKPKPAAPKKKRQPPPAKKQKRKQKPGKRQRM) are compositionally biased toward basic residues. The short motif at 67–70 (KRKK) is the Nuclear localization signal element. Residues 83–113 (KRQPPPAKKQKRKQKPGKRQRMCMKLESDKT) are binding to the viral RNA. The interval 98 to 112 (PGKRQRMCMKLESDK) is ribosome-binding. S110 carries the phosphoserine modification. The Peptidase S3 domain occupies 112 to 261 (KTFPILLNGQ…KDTPEGSEPW (150 aa)). A Phosphothreonine modification is found at T113. Catalysis depends on charge relay system residues H138, D160, and S212. The functions as an uncleaved signal peptide for the precursor of protein E3/E2 stretch occupies residues 262 to 273 (SLTTVMCVLANI). N-linked (GlcNAc...) asparagine; by host glycosylation is present at N272. Over 325 to 688 (DLETHFTQYK…YYYNRYPMTT (364 aa)) the chain is Extracellular. Residues 689–709 (IVGLCTCAAIIMVSCITSVWL) form a helical membrane-spanning segment. Residues 710-744 (LCRTRNLCITPYRLAPNAQVPILLAVLCCVKPTRA) are Cytoplasmic-facing. Residues C717, C737, and C738 are each lipidated (S-palmitoyl cysteine; by host). Residues 717 to 737 (CITPYRLAPNAQVPILLAVLC) form a transient transmembrane before p62-6K protein processing region. Topologically, residues 745 to 759 (DDTLQVLNYLWNNNQ) are extracellular. The next 2 helical transmembrane spans lie at 760–780 (NFFWMQTLIPLAALIVCMRML) and 781–801 (RCLLCCGPAFLLVCGALGAAA). Topologically, residues 802–1218 (YEHTAVMPNK…WSWLKVLVGS (417 aa)) are extracellular. 8 disulfides stabilise this stretch: C850/C915, C863/C895, C864/C897, C869/C879, C1061/C1073, C1103/C1178, C1108/C1182, and C1130/C1172. The segment at 885–902 (VYPFMWGGAYCFCDTENT) is E1 fusion peptide loop. A helical membrane pass occupies residues 1219–1239 (TSAFIVLGLIATAVVALVLFT). The Cytoplasmic portion of the chain corresponds to 1240–1242 (HKH).

Part of a tetrameric complex composed of host CRM1, host importin alpha/beta dimer and the viral capsid; this complex blocks the receptor-mediated transport through the nuclear pore. Interacts with host phosphatase PPP1CA; this interaction dephosphorylates the capsid protein, which increases its ability to bind to the viral genome. Interacts with host karyopherin KPNA4; this interaction allows the nuclear import of the viral capsid protein. Interacts with spike glycoprotein E2. Interacts with host IRAK1; the interaction leads to inhibition of IRAK1-dependent signaling. As to quaternary structure, the precursor of protein E3/E2 and E1 form a heterodimer shortly after synthesis. In terms of assembly, the precursor of protein E3/E2 and E1 form a heterodimer shortly after synthesis. Processing of the precursor of protein E3/E2 into E2 and E3 results in a heterodimer of the spike glycoproteins E2 and E1. Spike at virion surface are constituted of three E2-E1 heterodimers. After target cell attachment and endocytosis, E1 change conformation to form homotrimers. Interacts with 6K protein. Processing of the precursor of protein E3/E2 into E2 and E3 results in a heterodimer of the spike glycoproteins E2 and E1. Spike at virion surface are constituted of three E2-E1 heterodimers. Interacts with 6K protein. As to quaternary structure, interacts with spike glycoprotein E1. Interacts with spike glycoprotein E2. Structural polyprotein: Specific enzymatic cleavages in vivo yield mature proteins. Capsid protein is auto-cleaved during polyprotein translation, unmasking a signal peptide at the N-terminus of the precursor of E3/E2. The remaining polyprotein is then targeted to the host endoplasmic reticulum, where host signal peptidase cleaves it into pE2, 6K and E1 proteins. pE2 is further processed to mature E3 and E2 by host furin in trans-Golgi vesicle. Post-translationally, phosphorylated on serine and threonine residues. In terms of processing, palmitoylated via thioester bonds. These palmitoylations may induce disruption of the C-terminus transmembrane. This would result in the reorientation of E2 C-terminus from lumenal to cytoplasmic side. N-glycosylated. Post-translationally, palmitoylated via thioester bonds.

The protein resides in the virion. It is found in the host cytoplasm. The protein localises to the host cell membrane. It localises to the host nucleus. Its subcellular location is the virion membrane. The enzyme catalyses Autocatalytic release of the core protein from the N-terminus of the togavirus structural polyprotein by hydrolysis of a -Trp-|-Ser- bond.. In terms of biological role, forms an icosahedral capsid with a T=4 symmetry composed of 240 copies of the capsid protein surrounded by a lipid membrane through which penetrate 80 spikes composed of trimers of E1-E2 heterodimers. The capsid protein binds to the viral RNA genome at a site adjacent to a ribosome binding site for viral genome translation following genome release. Possesses a protease activity that results in its autocatalytic cleavage from the nascent structural protein. Following its self-cleavage, the capsid protein transiently associates with ribosomes, and within several minutes the protein binds to viral RNA and rapidly assembles into icosahedric core particles. The resulting nucleocapsid eventually associates with the cytoplasmic domain of the spike glycoprotein E2 at the cell membrane, leading to budding and formation of mature virions. In case of infection, new virions attach to target cells and after clathrin-mediated endocytosis their membrane fuses with the host endosomal membrane. This leads to the release of the nucleocapsid into the cytoplasm, followed by an uncoating event necessary for the genomic RNA to become accessible. The uncoating might be triggered by the interaction of capsid proteins with ribosomes. Binding of ribosomes would release the genomic RNA since the same region is genomic RNA-binding and ribosome-binding. Specifically inhibits interleukin-1 receptor-associated kinase 1/IRAK1-dependent signaling during viral entry, representing a means by which the alphaviruses may evade innate immune detection and activation prior to viral gene expression. Inhibits host transcription. Forms a tetrameric complex with XPO1/CRM1 and the nuclear import receptor importin. This complex blocks the central channel of host nuclear pores thereby inhibiting the receptor-mediated nuclear transport and thus the host mRNA and rRNA transcription. The inhibition of transcription is linked to a cytopathic effect on the host cell. Functionally, provides the signal sequence for the translocation of the precursor of protein E3/E2 to the host endoplasmic reticulum. Furin-cleaved E3 remains associated with spike glycoprotein E1 and mediates pH protection of the latter during the transport via the secretory pathway. After virion release from the host cell, the assembly protein E3 is gradually released in the extracellular space. Plays a role in viral attachment to target host cell, by binding to the cell receptor. Synthesized as a p62 precursor which is processed by furin at the cell membrane just before virion budding, giving rise to E2-E1 heterodimer. The p62-E1 heterodimer is stable, whereas E2-E1 is unstable and dissociate at low pH. p62 is processed at the last step, presumably to avoid E1 fusion activation before its final export to cell surface. E2 C-terminus contains a transitory transmembrane that would be disrupted by palmitoylation, resulting in reorientation of the C-terminal tail from lumenal to cytoplasmic side. This step is critical since E2 C-terminus is involved in budding by interacting with capsid proteins. This release of E2 C-terminus in cytoplasm occurs lately in protein export, and precludes premature assembly of particles at the endoplasmic reticulum membrane. Its function is as follows. Constitutive membrane protein involved in virus glycoprotein processing, cell permeabilization, and the budding of viral particles. Disrupts the calcium homeostasis of the cell, probably at the endoplasmic reticulum level. This leads to cytoplasmic calcium elevation. Because of its lipophilic properties, the 6K protein is postulated to influence the selection of lipids that interact with the transmembrane domains of the glycoproteins, which, in turn, affects the deformability of the bilayer required for the extreme curvature that occurs as budding proceeds. Present in low amount in virions, about 3% compared to viral glycoproteins. In terms of biological role, class II viral fusion protein. Fusion activity is inactive as long as E1 is bound to E2 in mature virion. After virus attachment to target cell and endocytosis, acidification of the endosome would induce dissociation of E1/E2 heterodimer and concomitant trimerization of the E1 subunits. This E1 trimer is fusion active, and promotes release of viral nucleocapsid in cytoplasm after endosome and viral membrane fusion. Efficient fusion requires the presence of cholesterol and sphingolipid in the target membrane. Fusion is optimal at levels of about 1 molecule of cholesterol per 2 molecules of phospholipids, and is specific for sterols containing a 3-beta-hydroxyl group. The chain is Structural polyprotein from Aedes (Human).